A 349-amino-acid polypeptide reads, in one-letter code: MKLHHCLSFLLVVTLVPAALSLEDVAPLGANQSSYNASFLPSFELSAGSYSGDDVIIVKEGTNVSLECLLTVDQYGEVHWYNSKGQQLHSRGGKWLVSDNFLNITSVAFDDRGLYTCIITSPARASYSVTLRVIFTSGDMSVYYMVVCLIAFTITLILNVTRLCLMSTHLRKTEKAINEFFRTEGAEKLQKAFEIAKRIPIITSAKTLELAKVTQFKTMEFARYIEELARSVPLPPLILNCRAFVEEMFEAVRVDDPDDMGERIKERPALDAQSGIYVINPELGRSNSPGGDSDDGSLSEQGQEIAVQVSVHLQSETKSIGTDSQDSSHFSPPSDPASAEGSIHHRVSI.

The signal sequence occupies residues 1-21 (MKLHHCLSFLLVVTLVPAALS). Residues 22-139 (LEDVAPLGAN…TLRVIFTSGD (118 aa)) lie on the Extracellular side of the membrane. 4 N-linked (GlcNAc...) asparagine glycosylation sites follow: asparagine 31, asparagine 36, asparagine 63, and asparagine 103. The 90-residue stretch at 41-130 (PSFELSAGSY…SPARASYSVT (90 aa)) folds into the Ig-like C2-type domain. An intrachain disulfide couples cysteine 68 to cysteine 117. The helical transmembrane segment at 140–160 (MSVYYMVVCLIAFTITLILNV) threads the bilayer. The Cytoplasmic portion of the chain corresponds to 161 to 349 (TRLCLMSTHL…EGSIHHRVSI (189 aa)). Positions 280–349 (NPELGRSNSP…EGSIHHRVSI (70 aa)) are disordered. Residues 311 to 331 (VHLQSETKSIGTDSQDSSHFS) show a composition bias toward polar residues.

Glycosylated.

It localises to the cell membrane. In terms of biological role, component of the elastin-associated microfibrils. In Mus musculus (Mouse), this protein is Microfibril-associated glycoprotein 3 (Mfap3).